The primary structure comprises 113 residues: Urocortin-2 (113 aa).

An N-terminal signal peptide occupies residues 1–23 (MMTRWALVVFVVLMLDRILFVPG). Positions 24-71 (TPIPTFQLLPQNSLETTPSSVTSESSSGTTTGPSASWSNSKASPYLDT) are excised as a propeptide. Residues 37-61 (LETTPSSVTSESSSGTTTGPSASWS) show a composition bias toward low complexity. Positions 37–64 (LETTPSSVTSESSSGTTTGPSASWSNSK) are disordered. Val110 is modified (valine amide; partial).

The protein belongs to the sauvagine/corticotropin-releasing factor/urotensin I family. Binds with high affinity to CRF receptors 2-alpha and 2-beta. In terms of processing, glycosylated.

The protein localises to the secreted. In terms of biological role, suppresses food intake, delays gastric emptying and decreases heat-induced edema. Might represent an endogenous ligand for maintaining homeostasis after stress. The sequence is that of Urocortin-2 (Ucn2) from Mus musculus (Mouse).